The following is a 103-amino-acid chain: Histone H4 (103 aa).

Over residues 1 to 14 (MSGRGKGGKGLGKG) the composition is skewed to gly residues. Positions 1–20 (MSGRGKGGKGLGKGGAKRHR) are disordered. S2 carries the N-acetylserine modification. An N6-acetyl-N6-methyllysine; alternate mark is found at K6 and K13. K17 carries the post-translational modification N6-acetyllysine. Residues 17–21 (KRHRK) mediate DNA binding. K21 carries the post-translational modification N6-methyllysine.

The protein belongs to the histone H4 family. The nucleosome is a histone octamer containing two molecules each of H2A, H2B, H3 and H4 assembled in one H3-H4 heterotetramer and two H2A-H2B heterodimers. The octamer wraps approximately 147 bp of DNA.

It is found in the nucleus. It localises to the chromosome. Functionally, core component of nucleosome. Nucleosomes wrap and compact DNA into chromatin, limiting DNA accessibility to the cellular machineries which require DNA as a template. Histones thereby play a central role in transcription regulation, DNA repair, DNA replication and chromosomal stability. DNA accessibility is regulated via a complex set of post-translational modifications of histones, also called histone code, and nucleosome remodeling. In Holothuria tubulosa (Tubular sea cucumber), this protein is Histone H4.